Consider the following 562-residue polypeptide: Probable E3 ubiquitin-protein ligase ARI7 (562 aa).

The disordered stretch occupies residues 1–39 (MDSEEDMLDAHDMESGEDDFYSGGTDDCNDSDDGEPDYG). A compositionally biased stretch (acidic residues) spans 27–39 (DCNDSDDGEPDYG). The segment at 133 to 346 (SELTCGICFD…GGFYACNRYE (214 aa)) is TRIAD supradomain. 18 residues coordinate Zn(2+): C137, C140, C154, H156, C159, C162, C182, C187, C226, C231, C248, C250, C255, C258, H263, C268, C295, and C298. An RING-type 1 zinc finger spans residues 137-187 (CGICFDSYPPEKIASVSCGHPFCTTCWTGYISTTINDGPGCLMLRCPDPSC). An IBR-type zinc finger spans residues 206–268 (EKYNRYFLRS…TEEAHRPVDC (63 aa)). The RING-type 2; atypical zinc finger occupies 295–325 (CPRCKRPIEKNQGCMHMTCTPPCKYEFCWLC). C308 is a catalytic residue. The Zn(2+) site is built by C313, C317, C322, C325, H332, and C342. Positions 524 to 562 (ACSSKSTSSKSTGCSSKTRGKGKGSSRTGGSSRNPDDNL) are disordered. The segment covering 525 to 540 (CSSKSTSSKSTGCSSK) has biased composition (low complexity).

It belongs to the RBR family. Ariadne subfamily. It depends on Zn(2+) as a cofactor. As to expression, ubiquitous.

The catalysed reaction is [E2 ubiquitin-conjugating enzyme]-S-ubiquitinyl-L-cysteine + [acceptor protein]-L-lysine = [E2 ubiquitin-conjugating enzyme]-L-cysteine + [acceptor protein]-N(6)-ubiquitinyl-L-lysine.. Its pathway is protein modification; protein ubiquitination. Might act as an E3 ubiquitin-protein ligase, or as part of E3 complex, which accepts ubiquitin from specific E2 ubiquitin-conjugating enzymes and then transfers it to substrates. This is Probable E3 ubiquitin-protein ligase ARI7 (ARI7) from Arabidopsis thaliana (Mouse-ear cress).